We begin with the raw amino-acid sequence, 895 residues long: AP-1 complex subunit gamma (895 aa).

5 HEAT repeats span residues 130–166, 167–205, 211–256, 301–339, and 341–376; these read TAMA…LRKV, PDLT…MDST, KKMV…ILGQ, NGLK…TDIQ, and VQRH…ESNI. Disordered regions lie at residues 591–687, 706–733, and 746–770; these read KQEE…MNNM, NNNS…NNKS, and QLTP…QTSV. Low complexity-rich tracts occupy residues 604–626, 639–658, 675–687, 706–731, and 746–765; these read PTQT…QSSQ, QSSA…GGNA, NGNM…MNNM, NNNS…NNNN, and QLTP…LSPT. One can recognise a GAE domain in the interval 775 to 893; sequence PQPLTFLVYQ…SDVPDTPLPS (119 aa).

It belongs to the adaptor complexes large subunit family. Adaptor protein complex 1 (AP-1) is a heterotetramer composed of two large adaptins (gamma-type subunit and beta-type subunit), a medium adaptin (mu-type subunit) and a small adaptin (sigma-type subunit). Interacts with rhgA.

The protein resides in the golgi apparatus. It localises to the trans-Golgi network. It is found in the cytoplasmic vesicle. Its subcellular location is the clathrin-coated vesicle membrane. Subunit of clathrin-associated adaptor protein complex 1 that plays a role in protein sorting in the trans-Golgi network (TGN) and endosomes. The AP complexes mediate the recruitment of clathrin to membranes and the recognition of sorting signals within the cytosolic tails of transmembrane cargo molecules. Also involved in early steps of phagocytosis and macropinocytosis. This chain is AP-1 complex subunit gamma (ap1g1), found in Dictyostelium discoideum (Social amoeba).